We begin with the raw amino-acid sequence, 214 residues long: Large ribosomal subunit protein bL25 (214 aa).

A disordered region spans residues 189 to 214 (IHASRKAKADEDEAAEGEEGEEGAED). The span at 198–214 (DEDEAAEGEEGEEGAED) shows a compositional bias: acidic residues.

This sequence belongs to the bacterial ribosomal protein bL25 family. CTC subfamily. As to quaternary structure, part of the 50S ribosomal subunit; part of the 5S rRNA/L5/L18/L25 subcomplex. Contacts the 5S rRNA. Binds to the 5S rRNA independently of L5 and L18.

In terms of biological role, this is one of the proteins that binds to the 5S RNA in the ribosome where it forms part of the central protuberance. The sequence is that of Large ribosomal subunit protein bL25 from Alkalilimnicola ehrlichii (strain ATCC BAA-1101 / DSM 17681 / MLHE-1).